The sequence spans 583 residues: Pentatricopeptide repeat-containing protein At3g59040 (583 aa).

PPR repeat units follow at residues 138 to 172 (SEID…GSTP), 173 to 207 (NVIS…GPEP), 208 to 242 (SAIT…KKSP), 246 to 280 (DQKM…GVPQ), 281 to 312 (STVT…DIQP), 313 to 347 (DVVS…GVRP), 348 to 382 (THKA…RIFP), 383 to 417 (DLWS…GFEP), 418 to 452 (NIVT…GIKA), and 453 to 487 (NQTI…GVPP). A disordered region spans residues 525–583 (VYGSDDDEEGVEDISSESSDDEDEGDDDDDDARETVLYDKPQEGSLGYGSLQTEELVGL). The span at 528–556 (SDDDEEGVEDISSESSDDEDEGDDDDDDA) shows a compositional bias: acidic residues. Positions 557-566 (RETVLYDKPQ) are enriched in basic and acidic residues.

Belongs to the PPR family. P subfamily.

This Arabidopsis thaliana (Mouse-ear cress) protein is Pentatricopeptide repeat-containing protein At3g59040.